The following is a 389-amino-acid chain: S-adenosylmethionine synthase (389 aa).

His18 is a binding site for ATP. Mg(2+) is bound at residue Asp20. Glu46 is a binding site for K(+). L-methionine is bound by residues Glu59 and Gln103. Residues 103-113 (QSADIAMGVDS) are flexible loop. Residues 168-170 (DSK), Asp244, 250-251 (RK), Ala267, and Lys271 each bind ATP. Position 244 (Asp244) interacts with L-methionine. Lys275 contacts L-methionine.

This sequence belongs to the AdoMet synthase family. As to quaternary structure, homotetramer; dimer of dimers. Requires Mg(2+) as cofactor. The cofactor is K(+).

The protein localises to the cytoplasm. It carries out the reaction L-methionine + ATP + H2O = S-adenosyl-L-methionine + phosphate + diphosphate. Its pathway is amino-acid biosynthesis; S-adenosyl-L-methionine biosynthesis; S-adenosyl-L-methionine from L-methionine: step 1/1. In terms of biological role, catalyzes the formation of S-adenosylmethionine (AdoMet) from methionine and ATP. The overall synthetic reaction is composed of two sequential steps, AdoMet formation and the subsequent tripolyphosphate hydrolysis which occurs prior to release of AdoMet from the enzyme. This Pelagibacter ubique (strain HTCC1062) protein is S-adenosylmethionine synthase.